Reading from the N-terminus, the 307-residue chain is Nicotinamide/nicotinic acid mononucleotide adenylyltransferase 2 (307 aa).

2 residues coordinate NAD(+): Ser-16 and Phe-17. His-24 lines the ATP pocket. NAD(+) contacts are provided by Trp-92 and Thr-95. Residues Cys-164 and Cys-165 are each lipidated (S-palmitoyl cysteine). NAD(+) contacts are provided by Gly-200, Asp-202, Leu-212, Trp-213, and Arg-232. An ATP-binding site is contributed by 271-274; it reads TKSR.

This sequence belongs to the eukaryotic NMN adenylyltransferase family. As to quaternary structure, monomer. Mg(2+) serves as cofactor. Post-translationally, degraded in response to injured neurite. Degradation is caused by polyubiquitination by MYCBP2 after recognition by FBXO45. Palmitoylated; palmitoylation is required for membrane association.

It is found in the golgi apparatus membrane. Its subcellular location is the cytoplasmic vesicle membrane. It localises to the cytoplasm. The protein resides in the cell projection. The protein localises to the axon. The catalysed reaction is beta-nicotinamide D-ribonucleotide + ATP + H(+) = diphosphate + NAD(+). It carries out the reaction nicotinate beta-D-ribonucleotide + ATP + H(+) = deamido-NAD(+) + diphosphate. It participates in cofactor biosynthesis; NAD(+) biosynthesis; NAD(+) from nicotinamide D-ribonucleotide: step 1/1. The protein operates within cofactor biosynthesis; NAD(+) biosynthesis; deamido-NAD(+) from nicotinate D-ribonucleotide: step 1/1. With respect to regulation, inhibited by P1-(adenosine-5')-P3-(nicotinamide-riboside-5')-triphosphate (Np3AD) and P1-(adenosine-5')-P4-(nicotinamide-riboside-5')-tetraphosphate (Np4AD). Nicotinamide/nicotinate-nucleotide adenylyltransferase that acts as an axon maintenance factor. Axon survival factor required for the maintenance of healthy axons: acts by delaying Wallerian axon degeneration, an evolutionarily conserved process that drives the loss of damaged axons. Catalyzes the formation of NAD(+) from nicotinamide mononucleotide (NMN) and ATP. Can also use the deamidated form; nicotinic acid mononucleotide (NaMN) as substrate but with a lower efficiency. Cannot use triazofurin monophosphate (TrMP) as substrate. Also catalyzes the reverse reaction, i.e. the pyrophosphorolytic cleavage of NAD(+). For the pyrophosphorolytic activity prefers NAD(+), NADH and NaAD as substrates and degrades nicotinic acid adenine dinucleotide phosphate (NHD) less effectively. Fails to cleave phosphorylated dinucleotides NADP(+), NADPH and NaADP(+). Also acts as an activator of ADP-ribosylation by supporting the catalytic activity of PARP16 and promoting mono-ADP-ribosylation of ribosomes by PARP16. May be involved in the maintenance of axonal integrity. The chain is Nicotinamide/nicotinic acid mononucleotide adenylyltransferase 2 (Nmnat2) from Rattus norvegicus (Rat).